A 352-amino-acid polypeptide reads, in one-letter code: Uroporphyrinogen decarboxylase (352 aa).

Substrate contacts are provided by residues 29–33 (RQAGR), Phe48, Asp78, Tyr154, Ser209, and His322.

This sequence belongs to the uroporphyrinogen decarboxylase family. Homodimer.

The protein localises to the cytoplasm. It catalyses the reaction uroporphyrinogen III + 4 H(+) = coproporphyrinogen III + 4 CO2. It functions in the pathway porphyrin-containing compound metabolism; protoporphyrin-IX biosynthesis; coproporphyrinogen-III from 5-aminolevulinate: step 4/4. Functionally, catalyzes the decarboxylation of four acetate groups of uroporphyrinogen-III to yield coproporphyrinogen-III. The protein is Uroporphyrinogen decarboxylase of Bacillus pumilus (strain SAFR-032).